The following is a 550-amino-acid chain: Probable methionine--tRNA ligase, cytoplasmic (550 aa).

Positions 10–20 match the 'HIGH' region motif; the sequence is PYVNNQPHLGN. The short motif at 328–332 is the 'KMSKS' region element; sequence KFSKS. Lys331 serves as a coordination point for ATP.

This sequence belongs to the class-I aminoacyl-tRNA synthetase family.

Its subcellular location is the cytoplasm. The enzyme catalyses tRNA(Met) + L-methionine + ATP = L-methionyl-tRNA(Met) + AMP + diphosphate. This Encephalitozoon cuniculi (strain GB-M1) (Microsporidian parasite) protein is Probable methionine--tRNA ligase, cytoplasmic.